We begin with the raw amino-acid sequence, 492 residues long: N-succinylglutamate 5-semialdehyde dehydrogenase (492 aa).

220 to 225 contributes to the NAD(+) binding site; the sequence is GSANTG. Active-site residues include E243 and C277.

The protein belongs to the aldehyde dehydrogenase family. AstD subfamily.

The catalysed reaction is N-succinyl-L-glutamate 5-semialdehyde + NAD(+) + H2O = N-succinyl-L-glutamate + NADH + 2 H(+). It participates in amino-acid degradation; L-arginine degradation via AST pathway; L-glutamate and succinate from L-arginine: step 4/5. Functionally, catalyzes the NAD-dependent reduction of succinylglutamate semialdehyde into succinylglutamate. The chain is N-succinylglutamate 5-semialdehyde dehydrogenase from Escherichia coli (strain UTI89 / UPEC).